The sequence spans 504 residues: UDP-N-acetylmuramoylalanine--D-glutamate ligase (504 aa).

129–135 contributes to the ATP binding site; the sequence is GTNGKTT.

It belongs to the MurCDEF family.

Its subcellular location is the cytoplasm. The enzyme catalyses UDP-N-acetyl-alpha-D-muramoyl-L-alanine + D-glutamate + ATP = UDP-N-acetyl-alpha-D-muramoyl-L-alanyl-D-glutamate + ADP + phosphate + H(+). Its pathway is cell wall biogenesis; peptidoglycan biosynthesis. Its function is as follows. Cell wall formation. Catalyzes the addition of glutamate to the nucleotide precursor UDP-N-acetylmuramoyl-L-alanine (UMA). This is UDP-N-acetylmuramoylalanine--D-glutamate ligase from Burkholderia mallei (strain NCTC 10247).